A 148-amino-acid polypeptide reads, in one-letter code: Receptor activity-modifying protein 1 (148 aa).

A signal peptide spans 1–26; the sequence is MVRVLRGLPWRGLWLLLAHQLFLVTA. 3 cysteine pairs are disulfide-bonded: C27/C82, C40/C72, and C57/C104. Topologically, residues 27-118 are extracellular; that stretch reads CQDAHYGTLM…RALGDPPSTI (92 aa). Residues 119–140 form a helical membrane-spanning segment; sequence LCPFVVLPITVTLLVTALVVWR. Residues 141–148 lie on the Cytoplasmic side of the membrane; sequence SKRAESIV.

It belongs to the RAMP family. As to quaternary structure, heterodimer of CALCRL and RAMP1; the interaction induces allosteric modulation of CALCRL function and CGRP1/CALCA and CGRP2/CALCB ligand specificity. Heterodimer of CALCR and RAMP1; interaction forms the AMYR1 receptor complex for amylin/IAPP and CGRP1/CALCA ligands.

Its subcellular location is the cell membrane. Its function is as follows. Accessory protein that interacts with and modulates the function of G-protein coupled receptors including calcitonin gene-related peptide type 1 receptor (CALCRL) and calcitonin receptor (CALCR). Required for the transport of CALCRL to the plasma membrane. Together with CALCRL, form the receptor complex for the calcitonin gene-related peptides CGRP1/CALCA and CGRP2/CALCB. Together with CALCR, form the AMYR1 receptor complex for amylin/IAPP and CGRP1/CALCA. The protein is Receptor activity-modifying protein 1 (RAMP1) of Cavia porcellus (Guinea pig).